Here is a 680-residue protein sequence, read N- to C-terminus: DNA-directed RNA polymerase subunit beta' (680 aa).

Residues Cys-69, Cys-71, Cys-87, and Cys-90 each contribute to the Zn(2+) site. Mg(2+)-binding residues include Asp-489, Asp-491, and Asp-493.

The protein belongs to the RNA polymerase beta' chain family. RpoC1 subfamily. In plastids the minimal PEP RNA polymerase catalytic core is composed of four subunits: alpha, beta, beta', and beta''. When a (nuclear-encoded) sigma factor is associated with the core the holoenzyme is formed, which can initiate transcription. The cofactor is Mg(2+). It depends on Zn(2+) as a cofactor.

It localises to the plastid. The protein resides in the chloroplast. It carries out the reaction RNA(n) + a ribonucleoside 5'-triphosphate = RNA(n+1) + diphosphate. In terms of biological role, DNA-dependent RNA polymerase catalyzes the transcription of DNA into RNA using the four ribonucleoside triphosphates as substrates. This chain is DNA-directed RNA polymerase subunit beta', found in Amborella trichopoda.